Here is a 309-residue protein sequence, read N- to C-terminus: Probable lipid kinase YegS-like (309 aa).

Positions methionine 1–tyrosine 133 constitute a DAGKc domain. Residues serine 39, glycine 65 to glutamate 71, and threonine 95 contribute to the ATP site. The Mg(2+) site is built by leucine 214, aspartate 217, and leucine 219. Glutamate 273 serves as the catalytic Proton acceptor.

This sequence belongs to the diacylglycerol/lipid kinase family. YegS lipid kinase subfamily. Requires Mg(2+) as cofactor. The cofactor is Ca(2+).

It is found in the cytoplasm. In terms of biological role, probably phosphorylates lipids; the in vivo substrate is unknown. The polypeptide is Probable lipid kinase YegS-like (Shewanella frigidimarina (strain NCIMB 400)).